The primary structure comprises 1742 residues: NACHT and WD repeat domain-containing protein 2 (1742 aa).

LRR repeat units follow at residues 386-410 (FYEY…GHIN), 677-698 (LEDV…TRPS), 724-747 (VKNV…LYLQ), 883-906 (YSQE…VTAF), and 925-953 (LPKL…SSMD). The NACHT domain maps to 410-737 (NPLIIYGGPC…TLLVWANRHL (328 aa)). WD repeat units follow at residues 963–1004 (LSSS…LLRQ), 1007–1046 (TAQS…LLSE), 1140–1179 (FSGG…SPQL), 1229–1271 (KHNE…ASLQ), 1272–1311 (EISG…AMSN), 1314–1353 (KTGK…IEAV), 1355–1394 (KHEG…NLFR), 1396–1434 (NGQR…RVCN), 1476–1516 (EDGT…ICRR), 1522–1564 (NFLK…VHAS), and 1614–1653 (SLYK…DAAL).

The sequence is that of NACHT and WD repeat domain-containing protein 2 (NWD2) from Homo sapiens (Human).